The sequence spans 245 residues: 1-(5-phosphoribosyl)-5-[(5-phosphoribosylamino)methylideneamino] imidazole-4-carboxamide isomerase (245 aa).

Asp7 serves as the catalytic Proton acceptor. Asp129 acts as the Proton donor in catalysis.

It belongs to the HisA/HisF family.

It localises to the cytoplasm. It catalyses the reaction 1-(5-phospho-beta-D-ribosyl)-5-[(5-phospho-beta-D-ribosylamino)methylideneamino]imidazole-4-carboxamide = 5-[(5-phospho-1-deoxy-D-ribulos-1-ylimino)methylamino]-1-(5-phospho-beta-D-ribosyl)imidazole-4-carboxamide. It functions in the pathway amino-acid biosynthesis; L-histidine biosynthesis; L-histidine from 5-phospho-alpha-D-ribose 1-diphosphate: step 4/9. The polypeptide is 1-(5-phosphoribosyl)-5-[(5-phosphoribosylamino)methylideneamino] imidazole-4-carboxamide isomerase (Serratia proteamaculans (strain 568)).